The chain runs to 115 residues: NADH-ubiquinone oxidoreductase chain 3 (115 aa).

The next 3 membrane-spanning stretches (helical) occupy residues 3-23 (LPLALTTSITLTLLLVTIAFW), 55-75 (FFLVAITFLLFDLEIALLLPL), and 86-106 (LMLTVALVLITILAAGLAYEW).

This sequence belongs to the complex I subunit 3 family. As to quaternary structure, core subunit of respiratory chain NADH dehydrogenase (Complex I) which is composed of 45 different subunits. Interacts with TMEM186. Interacts with TMEM242.

The protein localises to the mitochondrion inner membrane. The catalysed reaction is a ubiquinone + NADH + 5 H(+)(in) = a ubiquinol + NAD(+) + 4 H(+)(out). Its function is as follows. Core subunit of the mitochondrial membrane respiratory chain NADH dehydrogenase (Complex I) which catalyzes electron transfer from NADH through the respiratory chain, using ubiquinone as an electron acceptor. Essential for the catalytic activity of complex I. This Lemur catta (Ring-tailed lemur) protein is NADH-ubiquinone oxidoreductase chain 3.